Consider the following 349-residue polypeptide: N-acetyltaurine hydrolase (349 aa).

H26, H28, E169, H201, H230, and D298 together coordinate a divalent metal cation.

It belongs to the metallo-dependent hydrolases superfamily. Phosphotriesterase family. A divalent metal cation is required as a cofactor. Expressed primarily in proximal tubules of the kidney.

Its subcellular location is the cytoplasm. It localises to the cytosol. It catalyses the reaction N-acetyltaurine + H2O = taurine + acetate. It carries out the reaction N-propanoyltaurine + H2O = propanoate + taurine. The enzyme catalyses N-acetyl-L-methionine + H2O = L-methionine + acetate. The catalysed reaction is N-acetyl-L-isoleucine + H2O = L-isoleucine + acetate. It catalyses the reaction N-acetyl-L-leucine + H2O = L-leucine + acetate. It carries out the reaction N-acetyl-L-valine + H2O = L-valine + acetate. Functionally, N-acetyltaurine hydrolase that regulates feeding by catalyzing the hydrolysis of N-acetyltaurine into taurine and acetate. N-acetyltaurine has anorexigenic and anti-obesity effects that are dependent on GFRAL receptor and GDF15. PTER also acts on other N-acetyl amino acids (Met, Ile, Leu, Val) and N-propionyltaurine, but at lower rates. Binds resiniferotoxin, a vanilloid that desensitizes nociceptive neurons. The chain is N-acetyltaurine hydrolase from Rattus norvegicus (Rat).